A 388-amino-acid polypeptide reads, in one-letter code: Lipid-A-disaccharide synthase (388 aa).

This sequence belongs to the LpxB family.

The enzyme catalyses a lipid X + a UDP-2-N,3-O-bis[(3R)-3-hydroxyacyl]-alpha-D-glucosamine = a lipid A disaccharide + UDP + H(+). The protein operates within bacterial outer membrane biogenesis; LPS lipid A biosynthesis. Functionally, condensation of UDP-2,3-diacylglucosamine and 2,3-diacylglucosamine-1-phosphate to form lipid A disaccharide, a precursor of lipid A, a phosphorylated glycolipid that anchors the lipopolysaccharide to the outer membrane of the cell. This chain is Lipid-A-disaccharide synthase, found in Burkholderia thailandensis (strain ATCC 700388 / DSM 13276 / CCUG 48851 / CIP 106301 / E264).